The following is a 139-amino-acid chain: AALLVALLFVANAAAFRTTITTMEIDEDIDNPRRRGEGCREQIQRQQNLNHCQYYLRQQSRSGGYDEDNQRQHFRQCCQQLSQMDEQCQCEGLRQVVRRQQQQQGLRGEEMEEMVQSARDLPNECGISSQRCEIRRSWF.

The first 15 residues, 1 to 15 (AALLVALLFVANAAA), serve as a signal peptide directing secretion. 11 igE-binding regions span residues 16–30 (FRTT…EDID), 29–34 (IDNPRR), 64–78 (GYDE…RQCC), 65–73 (YDEDNQRQH), 95–103 (QVVRRQQQQ), 99–111 (RQQQ…GEEM), 102–114 (QQQG…MEEM), 105–117 (GLRG…MVQS), 112–126 (EEMV…NECG), 125–136 (CGISSQRCEIRR), and 125–139 (CGIS…RSWF). Propeptides lie at residues 16-31 (FRTT…DIDN) and 58-71 (QQSR…DNQR). 4 disulfides stabilise this stretch: C39-C88, C52-C77, C78-C125, and C90-C132. The segment at 104-115 (QGLRGEEMEEMV) is immunodominant epitope. IgE-binding; binds to IgE in 75% of the 20 walnut-allergic patients tested. The tract at residues 107–110 (RGEE) is minimally required for IgE-binding by the immunodominant epitope. Residues 136-139 (RSWF) constitute a propeptide that is removed on maturation.

This sequence belongs to the 2S seed storage albumins family. As to quaternary structure, the mature protein consists of a small chain and a large chain linked by disulfide bonds. As to expression, expressed in seed (at protein level). Expressed in the peel of mature seed.

Functionally, seed storage protein. The chain is 2S seed storage albumin protein from Juglans regia (English walnut).